Consider the following 246-residue polypeptide: Protein crossbronx (246 aa).

Residues Gln20 to Ala177 form the UBC core domain.

The protein belongs to the ubiquitin-conjugating enzyme family. FTS subfamily.

This chain is Protein crossbronx (cbx), found in Drosophila grimshawi (Hawaiian fruit fly).